The sequence spans 97 residues: Biogenesis of lysosome-related organelles complex 1 subunit SNN1 (97 aa).

Positions 45-97 (VVRLKQIRNLLKEEQEYYNEEEGLGVERERLEELELRVEKLTQKYKKLLADCV) form a coiled coil.

Belongs to the SNAPIN family. Component of the biogenesis of lysosome-related organelles complex-1 (BLOC-1).

The protein localises to the endosome. Component of the biogenesis of lysosome-related organelles complex-1 (BLOC-1), a complex involved in endosomal cargo sorting. This chain is Biogenesis of lysosome-related organelles complex 1 subunit SNN1 (SNN1), found in Lachancea thermotolerans (strain ATCC 56472 / CBS 6340 / NRRL Y-8284) (Yeast).